The following is a 339-amino-acid chain: Cathepsin B (339 aa).

A signal peptide spans 1 to 17 (MWWSLILLSCLLALTSA). A propeptide spans 18 to 79 (HDKPSFHPLS…GRVAFGEDID (62 aa)) (activation peptide). Disulfide bonds link Cys93–Cys122, Cys105–Cys150, Cys141–Cys207, Cys142–Cys146, Cys179–Cys211, and Cys187–Cys198. Cys108 is a catalytic residue. Asn192 carries an N-linked (GlcNAc...) asparagine glycan. Lys220 bears the N6-acetyllysine mark. Residues His278 and Asn298 contribute to the active site. Residues 334–339 (QYWGRF) constitute a propeptide that is removed on maturation.

This sequence belongs to the peptidase C1 family. Dimer of a heavy chain and a light chain cross-linked by a disulfide bond. Interacts with SRPX2. Directly interacts with SHKBP1. As to expression, expressed in thyroid epithelial cells.

It localises to the lysosome. It is found in the melanosome. Its subcellular location is the secreted. The protein resides in the extracellular space. The protein localises to the apical cell membrane. The enzyme catalyses Hydrolysis of proteins with broad specificity for peptide bonds. Preferentially cleaves -Arg-Arg-|-Xaa bonds in small molecule substrates (thus differing from cathepsin L). In addition to being an endopeptidase, shows peptidyl-dipeptidase activity, liberating C-terminal dipeptides.. Its function is as follows. Thiol protease which is believed to participate in intracellular degradation and turnover of proteins. Cleaves matrix extracellular phosphoglycoprotein MEPE. Involved in the solubilization of cross-linked TG/thyroglobulin in the thyroid follicle lumen. Has also been implicated in tumor invasion and metastasis. The sequence is that of Cathepsin B (Ctsb) from Mus musculus (Mouse).